A 128-amino-acid chain; its full sequence is MRNRKLGIDYSSDDFEGCPVETTLDIIGGKWKGILLYHLIDGKKRFNEFRKLYPKITQRMLTLQLRELERDGVIHREVYKQVPPKVEYSLTEFGRTLEPVILHMKDWGEKYKDRIDKLEAARKAEDKI.

The region spanning 18–116 (CPVETTLDII…WGEKYKDRID (99 aa)) is the HTH hxlR-type domain.

This is an uncharacterized protein from Bacillus subtilis (strain 168).